A 635-amino-acid polypeptide reads, in one-letter code: Threonine--tRNA ligase (635 aa).

The 61-residue stretch at 1 to 61 (MINIKFPDGS…NHDCELRLIT (61 aa)) folds into the TGS domain. The tract at residues 242–533 (DHRKIGKALD…LIEHYAGNMP (292 aa)) is catalytic. Cysteine 333, histidine 384, and histidine 510 together coordinate Zn(2+).

The protein belongs to the class-II aminoacyl-tRNA synthetase family. As to quaternary structure, homodimer. The cofactor is Zn(2+).

Its subcellular location is the cytoplasm. The catalysed reaction is tRNA(Thr) + L-threonine + ATP = L-threonyl-tRNA(Thr) + AMP + diphosphate + H(+). In terms of biological role, catalyzes the attachment of threonine to tRNA(Thr) in a two-step reaction: L-threonine is first activated by ATP to form Thr-AMP and then transferred to the acceptor end of tRNA(Thr). Also edits incorrectly charged L-seryl-tRNA(Thr). The chain is Threonine--tRNA ligase from Francisella philomiragia subsp. philomiragia (strain ATCC 25017 / CCUG 19701 / FSC 153 / O#319-036).